The sequence spans 298 residues: Acetylglutamate kinase (298 aa).

Substrate contacts are provided by residues 61–62, Arg-83, and Asn-188; that span reads GG.

This sequence belongs to the acetylglutamate kinase family. ArgB subfamily.

It localises to the cytoplasm. It catalyses the reaction N-acetyl-L-glutamate + ATP = N-acetyl-L-glutamyl 5-phosphate + ADP. The protein operates within amino-acid biosynthesis; L-arginine biosynthesis; N(2)-acetyl-L-ornithine from L-glutamate: step 2/4. Catalyzes the ATP-dependent phosphorylation of N-acetyl-L-glutamate. This Syntrophobacter fumaroxidans (strain DSM 10017 / MPOB) protein is Acetylglutamate kinase.